The sequence spans 169 residues: Proepiregulin (169 aa).

An N-terminal signal peptide occupies residues 1–29 (MTAGRRMEMLCAGRVPALLLCLGFHLLQA). The propeptide occupies 30–62 (VLSTTVIPSCIPGESSDNCTALVQTEDNPRVAQ). N47 carries an N-linked (GlcNAc...) asparagine glycan. Topologically, residues 60–119 (VAQVSITKCSSDMNGYCLHGQCIYLVDMSQNYCRCEVGYTGVRCEHFFLTVHQPLSKEYV) are extracellular. In terms of domain architecture, EGF-like spans 64–104 (SITKCSSDMNGYCLHGQCIYLVDMSQNYCRCEVGYTGVRCE). Intrachain disulfides connect C68–C81, C76–C92, and C94–C103. The propeptide at 109–169 (TVHQPLSKEY…TSGDPELPQV (61 aa)) is removed in mature form. Residues 120 to 140 (ALTVILIILFLITVVGSTYYF) traverse the membrane as a helical segment. Residues 141–169 (CRWYRNRKSKEPKKEYERVTSGDPELPQV) are Cytoplasmic-facing.

As to quaternary structure, interacts with EGFR and ERBB4. In normal adults, expressed predominantly in the placenta and peripheral blood leukocytes. High levels were detected in carcinomas of the bladder, lung, kidney and colon.

The protein localises to the secreted. It is found in the extracellular space. The protein resides in the cell membrane. In terms of biological role, ligand of the EGF receptor/EGFR and ERBB4. Stimulates EGFR and ERBB4 tyrosine phosphorylation. Contributes to inflammation, wound healing, tissue repair, and oocyte maturation by regulating angiogenesis and vascular remodeling and by stimulating cell proliferation. The polypeptide is Proepiregulin (EREG) (Homo sapiens (Human)).